Reading from the N-terminus, the 798-residue chain is Shutoff protein (798 aa).

Positions 1–14 are enriched in basic and acidic residues; it reads MESTADGDKARGEE. Positions 1–123 are disordered; it reads MESTADGDKA…SHSSDSELGC (123 aa). Over residues 33–49 the composition is skewed to acidic residues; that stretch reads APEDEHPDDGEPDEPAD. Residues 68–80 are compositionally biased toward basic and acidic residues; the sequence is GGRDAECDGEAAR. Residues 86-105 show a composition bias toward polar residues; the sequence is DESSAPTTPSTAVRRSSGES. Residues 309–376 are binding to host EIF4G; that stretch reads LMEVLLQPFA…GRPLYRSARA (68 aa). The RRM domain maps to 379-497; it reads SVFREPSSIK…AIYALETPTE (119 aa). Residue tyrosine 711 is modified to Phosphotyrosine; by host. Residues 740–798 are disordered; it reads YADHARGAATSAEPSRALRPTSVATAAGNRTRGCSSARYRLGPTLRRRSNSSWPREWST. Polar residues predominate over residues 789–798; the sequence is NSSWPREWST.

This sequence belongs to the adenoviridae shutoff protein family. Monomer. Interacts with hexon protein; this interaction allows chaperoning and trimerization of hexon proteins. Interacts (via N-terminus) with host initiation factor EIF4G (via C-terminus). Interacts (via RRM domain) with viral mRNAs that contain the tripartite leader; this interaction allows ribosome shunting and expression of viral late mRNAs. Might be cleaved by the viral protease. Post-translationally, phosphorylated. Tyrosine phosphorylation enhances preferential binding to tripartite leader mRNAs and allows ribosome shunting. In terms of processing, methylated. Asymmetric dimethylation by host PRMT1 of the Arg/Gly-rich region may regulate shutoff protein binding to hexon and promote the capsid assembly in the nucleus.

It is found in the host cytoplasm. In terms of biological role, protein that inhibits host translation while promoting late viral translation by ribosome shunting. Blocks host cap-dependent translation by binding to eIF4G, displacing MKNK1 from cap initiation complexes and preventing EIF4E phosphorylation. Binds to the tripartite leader sequence of viral late mRNAs and recruits host eIF4G, PABPC1/poly-A binding protein and 40S ribosomes subunits on viral mRNAs, allowing ribosome shunting and efficient translation of late viral mRNAs even though conventional translation via ribosome scanning from the cap has been shut off in the host cell. During assembly, acts as a chaperone protein that helps hexon proteins assembly into trimers. This chain is Shutoff protein, found in Galliformes (FAdV-10).